Consider the following 91-residue polypeptide: UPF0147 protein DKAM_0139 (91 aa).

Belongs to the UPF0147 family.

This Desulfurococcus amylolyticus (strain DSM 18924 / JCM 16383 / VKM B-2413 / 1221n) (Desulfurococcus kamchatkensis) protein is UPF0147 protein DKAM_0139.